Reading from the N-terminus, the 478-residue chain is Glutamyl-tRNA(Gln) amidotransferase subunit A 2 (478 aa).

Catalysis depends on charge relay system residues Lys79 and Ser154. The active-site Acyl-ester intermediate is the Ser178.

Belongs to the amidase family. GatA subfamily. As to quaternary structure, heterotrimer of A, B and C subunits.

It carries out the reaction L-glutamyl-tRNA(Gln) + L-glutamine + ATP + H2O = L-glutaminyl-tRNA(Gln) + L-glutamate + ADP + phosphate + H(+). Its function is as follows. Allows the formation of correctly charged Gln-tRNA(Gln) through the transamidation of misacylated Glu-tRNA(Gln) in organisms which lack glutaminyl-tRNA synthetase. The reaction takes place in the presence of glutamine and ATP through an activated gamma-phospho-Glu-tRNA(Gln). This is Glutamyl-tRNA(Gln) amidotransferase subunit A 2 (gatA2) from Clostridium acetobutylicum (strain ATCC 824 / DSM 792 / JCM 1419 / IAM 19013 / LMG 5710 / NBRC 13948 / NRRL B-527 / VKM B-1787 / 2291 / W).